The primary structure comprises 1945 residues: Rho GTPase-activating protein 21 (1945 aa).

The interval 26–53 (CEVSKNKDGKDQGEPVSPSEDEPFSWPG) is disordered. Over residues 29-38 (SKNKDGKDQG) the composition is skewed to basic and acidic residues. A phosphoserine mark is found at serine 42 and serine 63. One can recognise a PDZ domain in the interval 56–165 (TVMLKRTSQG…TLELSVMPKD (110 aa)). Disordered stretches follow at residues 210-229 (TAQPVETCPPDSLPNKQQTS) and 326-365 (HQTTGSRSLEPSGILLKSGNYSGHSEGISSSRSQAVDSPP). Positions 347–358 (SGHSEGISSSRS) are enriched in low complexity. The residue at position 454 (serine 454) is a Phosphoserine. Polar residues predominate over residues 499 to 512 (EATATVNSESQIPD). Positions 499–519 (EATATVNSESQIPDSNGERKQ) are disordered. Omega-N-methylarginine is present on residues arginine 549 and arginine 569. Disordered regions lie at residues 573–647 (PVSQ…RPVN) and 674–702 (EVSSCLPGTSAKTSPQLSENLGTSDLELP). The segment covering 589–600 (SNRNFPTTTGVS) has biased composition (polar residues). Phosphoserine occurs at positions 610 and 619. Over residues 674–696 (EVSSCLPGTSAKTSPQLSENLGT) the composition is skewed to polar residues. At threonine 741 the chain carries Phosphothreonine. A phosphoserine mark is found at serine 851, serine 856, and serine 875. 2 disordered regions span residues 852–879 (HDQESVGPPSLDGQHSSKTERSKSYDEG) and 902–921 (ITDSQKSSEDSGSRKGSSSE). Residues 866-879 (HSSKTERSKSYDEG) show a composition bias toward basic and acidic residues. A Phosphotyrosine modification is found at tyrosine 876. Serine 918, serine 920, serine 948, serine 1093, and serine 1109 each carry phosphoserine. Residues 924–1091 (SDAAREGWLQ…AKSEPKTQSP (168 aa)) are interaction with ARF1 and ARF6. A PH domain is found at 925–1034 (DAAREGWLQF…WIKTIQESSN (110 aa)). A disordered region spans residues 1080 to 1120 (LGAKSEPKTQSPHSPKEESERKLLSKDDTSPPKDKGTWRRG). A compositionally biased stretch (basic and acidic residues) spans 1093-1116 (SPKEESERKLLSKDDTSPPKDKGT). The region spanning 1141–1333 (VRLDDCPPAH…TLIQHHDWFF (193 aa)) is the Rho-GAP domain. 4 disordered regions span residues 1373–1396 (PGDVSDSATSDSAKSKGSWGSGKD), 1412–1632 (SRKR…PVFP), 1649–1794 (ARVS…LGGH), and 1846–1945 (RTSA…ETPP). Residues 1377–1395 (SDSATSDSAKSKGSWGSGK) show a composition bias toward low complexity. Phosphoserine is present on residues serine 1412, serine 1426, and serine 1427. 2 stretches are compositionally biased toward basic and acidic residues: residues 1435–1457 (FFKKENTEQSHSEIKEESKRESE) and 1471–1488 (SNTKKDSGTTKEEKKIPW). A Glycyl lysine isopeptide (Lys-Gly) (interchain with G-Cter in SUMO) cross-link involves residue lysine 1438. Threonine 1504 is subject to Phosphothreonine. 2 stretches are compositionally biased toward low complexity: residues 1531–1556 (SDSGTLLSTSSQASLLRSSTKKSTSP) and 1569–1589 (TTTSDYSTTSSTTYLTSLDSS). Residues 1579-1848 (STTYLTSLDS…WLARERVRTS (270 aa)) form an interaction with CTNNA1 region. Polar residues predominate over residues 1590–1599 (RLSPEVQSVA). The segment covering 1611-1621 (SELVSEGRPVE) has biased composition (basic and acidic residues). At serine 1656 the chain carries Phosphoserine. Composition is skewed to polar residues over residues 1658–1681 (GSEASCTEGSLTPSLDSRRQQFSS) and 1729–1738 (STGSLLTPSR). The residue at position 1669 (threonine 1669) is a Phosphothreonine. At serine 1729 the chain carries Phosphoserine. The span at 1739-1757 (SESEKQEATWKTKIADRLK) shows a compositional bias: basic and acidic residues. Over residues 1782–1792 (RKNIKRRHTLG) the composition is skewed to basic residues. The segment covering 1871-1882 (PISTHSPPSQQP) has biased composition (polar residues). Residues 1887-1896 (AATSTLASTS) show a composition bias toward low complexity. Threonine 1902 is modified (phosphothreonine). At serine 1906 the chain carries Phosphoserine. The span at 1907–1927 (PDQINRESFQNMSQNASSTAN) shows a compositional bias: polar residues. Residues 1932–1945 (KQSESPDTKAETPP) are compositionally biased toward basic and acidic residues.

Interacts with CTNNA1. Interacts with GTP-bound ARF1 and probably ARF6. Sumoylated with SUMO2 and SUMO3 in proliferating lymphocytes.

It localises to the golgi apparatus membrane. Its subcellular location is the cell junction. It is found in the cytoplasmic vesicle membrane. The protein resides in the cytoplasm. The protein localises to the cytoskeleton. Functionally, functions as a GTPase-activating protein (GAP) for RHOA and CDC42. Downstream partner of ARF1 which may control Golgi apparatus structure and function. Also required for CTNNA1 recruitment to adherens junctions. The protein is Rho GTPase-activating protein 21 of Mus musculus (Mouse).